A 268-amino-acid polypeptide reads, in one-letter code: Tryptophan synthase alpha chain (268 aa).

Catalysis depends on proton acceptor residues Glu-49 and Asp-60.

This sequence belongs to the TrpA family. Tetramer of two alpha and two beta chains.

It carries out the reaction (1S,2R)-1-C-(indol-3-yl)glycerol 3-phosphate + L-serine = D-glyceraldehyde 3-phosphate + L-tryptophan + H2O. It functions in the pathway amino-acid biosynthesis; L-tryptophan biosynthesis; L-tryptophan from chorismate: step 5/5. In terms of biological role, the alpha subunit is responsible for the aldol cleavage of indoleglycerol phosphate to indole and glyceraldehyde 3-phosphate. This chain is Tryptophan synthase alpha chain, found in Haemophilus influenzae (strain ATCC 51907 / DSM 11121 / KW20 / Rd).